Here is a 235-residue protein sequence, read N- to C-terminus: Orotidine 5'-phosphate decarboxylase (235 aa).

Substrate is bound by residues aspartate 12, lysine 34, 61–70 (DMKLLDIDNT), threonine 116, arginine 177, glutamine 186, and arginine 207. Lysine 63 functions as the Proton donor in the catalytic mechanism.

The protein belongs to the OMP decarboxylase family. Type 1 subfamily. In terms of assembly, homodimer.

It carries out the reaction orotidine 5'-phosphate + H(+) = UMP + CO2. It functions in the pathway pyrimidine metabolism; UMP biosynthesis via de novo pathway; UMP from orotate: step 2/2. In terms of biological role, catalyzes the decarboxylation of orotidine 5'-monophosphate (OMP) to uridine 5'-monophosphate (UMP). This chain is Orotidine 5'-phosphate decarboxylase, found in Agrobacterium fabrum (strain C58 / ATCC 33970) (Agrobacterium tumefaciens (strain C58)).